Here is a 428-residue protein sequence, read N- to C-terminus: Elongation factor 1-alpha (428 aa).

The region spanning 5-217 (KPHVNIVFIG…DQIPEPEKPV (213 aa)) is the tr-type G domain. Residues 14–21 (GHVDHGKS) form a G1 region. 14-21 (GHVDHGKS) is a binding site for GTP. S21 provides a ligand contact to Mg(2+). The tract at residues 68-72 (GITID) is G2. The interval 89-92 (DAPG) is G3. GTP contacts are provided by residues 89-93 (DAPGH) and 144-147 (NKMD). The G4 stretch occupies residues 144–147 (NKMD). Positions 181–183 (SAW) are G5.

It belongs to the TRAFAC class translation factor GTPase superfamily. Classic translation factor GTPase family. EF-Tu/EF-1A subfamily.

The protein resides in the cytoplasm. The enzyme catalyses GTP + H2O = GDP + phosphate + H(+). GTP hydrolase that promotes the GTP-dependent binding of aminoacyl-tRNA to the A-site of ribosomes during protein biosynthesis. The chain is Elongation factor 1-alpha from Pyrococcus abyssi (strain GE5 / Orsay).